The primary structure comprises 415 residues: MSFLKTSDPAVYNAIMQETTRLKETIDLIASENYTSKAVLEAQGSVFTNKYAEGYPGKRYYAGCEYADAVEELAIDRAKTLFHAEHANVQPHSGAQANMAAYFAMVKPGDTIMGLTLSHGGHLTHGSKVNFTGKLYHVIEYGLNAETERIDYDNLEKLAMEHRPRMIVTGASAYPRILDFERFRAICDKVDAKLMVDIAHIAGLVAAGLHPSPVPYADVVTSTSHKTLRGPRGGFILCKEQYAKAIDQAVFPVMQGGPLMQVVAAKAVAFQEAMQPGFVTYQKKTLENTQVMAEELRKLGLRLVSGGTDNHLVLVDLSPIGVNGYDAQLALRRAGIVINRNTVPFAENQTANVPAGIRLGCPAATSRGFGPAEIRQTVGWIGKVLKNIGNEDVEKQVLAEVIHLCRKFPVPGIDI.

Residues Leu117 and 121–123 each bind (6S)-5,6,7,8-tetrahydrofolate; that span reads GHL. An N6-(pyridoxal phosphate)lysine modification is found at Lys226.

It belongs to the SHMT family. As to quaternary structure, homodimer. Pyridoxal 5'-phosphate serves as cofactor.

The protein resides in the cytoplasm. The catalysed reaction is (6R)-5,10-methylene-5,6,7,8-tetrahydrofolate + glycine + H2O = (6S)-5,6,7,8-tetrahydrofolate + L-serine. The protein operates within one-carbon metabolism; tetrahydrofolate interconversion. It functions in the pathway amino-acid biosynthesis; glycine biosynthesis; glycine from L-serine: step 1/1. Catalyzes the reversible interconversion of serine and glycine with tetrahydrofolate (THF) serving as the one-carbon carrier. This reaction serves as the major source of one-carbon groups required for the biosynthesis of purines, thymidylate, methionine, and other important biomolecules. Also exhibits THF-independent aldolase activity toward beta-hydroxyamino acids, producing glycine and aldehydes, via a retro-aldol mechanism. This is Serine hydroxymethyltransferase from Dehalococcoides mccartyi (strain CBDB1).